The following is a 124-amino-acid chain: Small ribosomal subunit protein uS13 (124 aa).

Positions 94-124 are disordered; that stretch reads RGLPVRGQRTKTNARTRKGPKRTIAGKKKAR.

The protein belongs to the universal ribosomal protein uS13 family. In terms of assembly, part of the 30S ribosomal subunit. Forms a loose heterodimer with protein S19. Forms two bridges to the 50S subunit in the 70S ribosome.

Located at the top of the head of the 30S subunit, it contacts several helices of the 16S rRNA. In the 70S ribosome it contacts the 23S rRNA (bridge B1a) and protein L5 of the 50S subunit (bridge B1b), connecting the 2 subunits; these bridges are implicated in subunit movement. Contacts the tRNAs in the A and P-sites. The protein is Small ribosomal subunit protein uS13 of Mycolicibacterium vanbaalenii (strain DSM 7251 / JCM 13017 / BCRC 16820 / KCTC 9966 / NRRL B-24157 / PYR-1) (Mycobacterium vanbaalenii).